We begin with the raw amino-acid sequence, 200 residues long: Troponin I-like protein (200 aa).

Disordered regions lie at residues 1–20 (MGDE…AEVR) and 181–200 (ENKA…ENEE). A coiled-coil region spans residues 2-116 (GDEEKRKMEE…EDAKYDLEYE (115 aa)).

The protein belongs to the troponin I family. As to expression, expressed in salivary gland, gut, muscle and cuticle (at protein level).

Its function is as follows. Inhibits endothelial cell proliferation and angiogenesis in a vertebrate host. Probably required for efficient blood feeding on vertebrate hosts. In Haemaphysalis longicornis (Bush tick), this protein is Troponin I-like protein.